We begin with the raw amino-acid sequence, 627 residues long: 2-oxoacid:ferredoxin oxidoreductase 1, subunit alpha (627 aa).

The YPITP motif motif lies at 253–257 (YPITP). Positions 256 and 344 each coordinate substrate.

In terms of assembly, heterodimer composed of an alpha and a beta subunit.

It catalyses the reaction a 2-oxocarboxylate + 2 oxidized [2Fe-2S]-[ferredoxin] + CoA = an acyl-CoA + 2 reduced [2Fe-2S]-[ferredoxin] + CO2 + H(+). Inhibited by low concentration of 4-fluoro-7-nitrobenzofurazan (NBD-F). Catalyzes the coenzyme A-dependent oxidative decarboxylation of different 2-oxoacids such as 2-oxoglutarate, pyruvate and 2-oxobutyrate to form their CoA derivatives. In Sulfurisphaera tokodaii (strain DSM 16993 / JCM 10545 / NBRC 100140 / 7) (Sulfolobus tokodaii), this protein is 2-oxoacid:ferredoxin oxidoreductase 1, subunit alpha.